Consider the following 277-residue polypeptide: Bis(5'-nucleosyl)-tetraphosphatase, symmetrical (277 aa).

Belongs to the Ap4A hydrolase family.

The catalysed reaction is P(1),P(4)-bis(5'-adenosyl) tetraphosphate + H2O = 2 ADP + 2 H(+). Functionally, hydrolyzes diadenosine 5',5'''-P1,P4-tetraphosphate to yield ADP. This is Bis(5'-nucleosyl)-tetraphosphatase, symmetrical from Bordetella pertussis (strain Tohama I / ATCC BAA-589 / NCTC 13251).